The primary structure comprises 142 residues: Large ribosomal subunit protein uL11 (142 aa).

It belongs to the universal ribosomal protein uL11 family. Part of the ribosomal stalk of the 50S ribosomal subunit. Interacts with L10 and the large rRNA to form the base of the stalk. L10 forms an elongated spine to which L12 dimers bind in a sequential fashion forming a multimeric L10(L12)X complex. One or more lysine residues are methylated.

Forms part of the ribosomal stalk which helps the ribosome interact with GTP-bound translation factors. This is Large ribosomal subunit protein uL11 from Leptospira interrogans serogroup Icterohaemorrhagiae serovar copenhageni (strain Fiocruz L1-130).